An 88-amino-acid polypeptide reads, in one-letter code: UPF0297 protein SSA_2241 (88 aa).

It belongs to the UPF0297 family.

The protein is UPF0297 protein SSA_2241 of Streptococcus sanguinis (strain SK36).